The chain runs to 56 residues: Chymotrypsin inhibitor (56 aa).

Disulfide bonds link C3–C36, C12–C32, C16–C28, C20–C56, and C38–C50. The 54-residue stretch at 3–56 (CGPNEVFNTCGSACAPTCAQPKTRICTMQCRIGCQCQEGFLRNGEGACVLPENC) folds into the TIL domain.

The protein belongs to the serine protease inhibitor-like (TIL domain-containing) family.

It is found in the secreted. Its function is as follows. Chymotrypsin and cathepsin G inhibitor. This chain is Chymotrypsin inhibitor, found in Apis mellifera (Honeybee).